Consider the following 289-residue polypeptide: ATP synthase gamma chain (289 aa).

Belongs to the ATPase gamma chain family. In terms of assembly, F-type ATPases have 2 components, CF(1) - the catalytic core - and CF(0) - the membrane proton channel. CF(1) has five subunits: alpha(3), beta(3), gamma(1), delta(1), epsilon(1). CF(0) has three main subunits: a, b and c.

It localises to the cell inner membrane. Produces ATP from ADP in the presence of a proton gradient across the membrane. The gamma chain is believed to be important in regulating ATPase activity and the flow of protons through the CF(0) complex. The protein is ATP synthase gamma chain of Nitrosococcus oceani (strain ATCC 19707 / BCRC 17464 / JCM 30415 / NCIMB 11848 / C-107).